The primary structure comprises 71 residues: Protein SlyX homolog (71 aa).

This sequence belongs to the SlyX family.

The chain is Protein SlyX homolog from Rhodospirillum rubrum (strain ATCC 11170 / ATH 1.1.1 / DSM 467 / LMG 4362 / NCIMB 8255 / S1).